A 149-amino-acid polypeptide reads, in one-letter code: MRLNDPKPKTGSQHRRRRVGRGIAAGQGASCGFGMRGQKSRSGRPTRPGFEGGQNPLYRRVPKLKHFTLINQKQYTTINVGKLNELKAKSDVTLESLMAEGIITSNDGPLKVLGDGELTVALNVQAAAATQSAIAKVEGAGGSFQSTES.

The interval 1-57 (MRLNDPKPKTGSQHRRRRVGRGIAAGQGASCGFGMRGQKSRSGRPTRPGFEGGQNPL) is disordered. Residues 23–35 (IAAGQGASCGFGM) are compositionally biased toward gly residues.

Belongs to the universal ribosomal protein uL15 family. As to quaternary structure, part of the 50S ribosomal subunit.

Its function is as follows. Binds to the 23S rRNA. The protein is Large ribosomal subunit protein uL15 of Acaryochloris marina (strain MBIC 11017).